The sequence spans 988 residues: Protein SEMI-ROLLED LEAF 2 (988 aa).

The interval 844–865 (SVDGGLHESPITNTGSSISKTT) is disordered. Residues 853–865 (PITNTGSSISKTT) show a composition bias toward polar residues.

In terms of tissue distribution, expressed in root tips, and in the vascular bundles of leaf blades, leaf sheaths, and roots, especially in their sclerenchymatous cells.

The protein localises to the nucleus. Its subcellular location is the cytoplasm. Functionally, functions in regulating leaf rolling through abaxial side leaf cell differentiation. May be involved in the transdifferentiation process from mesophyll cells to sclerenchymatous cells. This is Protein SEMI-ROLLED LEAF 2 from Oryza sativa subsp. japonica (Rice).